The following is a 329-amino-acid chain: Phenylalanine--tRNA ligase alpha subunit (329 aa).

Belongs to the class-II aminoacyl-tRNA synthetase family. Phe-tRNA synthetase alpha subunit type 1 subfamily. As to quaternary structure, tetramer of two alpha and two beta subunits. Mg(2+) serves as cofactor.

The protein resides in the cytoplasm. The catalysed reaction is tRNA(Phe) + L-phenylalanine + ATP = L-phenylalanyl-tRNA(Phe) + AMP + diphosphate + H(+). The sequence is that of Phenylalanine--tRNA ligase alpha subunit (pheS) from Buchnera aphidicola subsp. Schizaphis graminum (strain Sg).